Reading from the N-terminus, the 1118-residue chain is Sodium-driven chloride bicarbonate exchanger (1118 aa).

Disordered regions lie at residues 1 to 23 and 58 to 97; these read MEIK…EEAV and GRKS…TPSQ. Residues 1–509 are Cytoplasmic-facing; sequence MEIKDQGAQM…DFRDAFSLQC (509 aa). Residues 59-76 are compositionally biased toward basic residues; the sequence is RKSHRRHRHRGHKHRKRD. A compositionally biased stretch (basic and acidic residues) spans 77-90; it reads RERDSGLEDGRESP. At Ser89 the chain carries Phosphoserine. Thr94 bears the Phosphothreonine mark. Residues His221 and His223 each coordinate Zn(2+). 2 disordered regions span residues 269 to 310 and 457 to 476; these read AENK…KGPP and NGTA…GPEL. Phosphoserine is present on Ser276. A helical membrane pass occupies residues 510 to 530; sequence LASFLFLYCACMSPVITFGGL. At 531 to 538 the chain is on the extracellular side; the sequence is LGEATEGR. The helical transmembrane segment at 539–559 threads the bilayer; the sequence is ISAIESLFGASMTGIAYSLFG. Residues 560-562 are Cytoplasmic-facing; sequence GQP. Residues 563-583 form a helical membrane-spanning segment; sequence LTILGSTGPVLVFEKILFKFC. The Extracellular portion of the chain corresponds to 584–596; the sequence is KEYGLSYLSLRAS. A helical transmembrane segment spans residues 597 to 617; the sequence is IGLWTATLCIILVATDASSLV. Over 618 to 626 the chain is Cytoplasmic; sequence CYITRFTEE. A helical membrane pass occupies residues 627–647; it reads AFASLICIIFIYEALEKLFEL. The Extracellular segment spans residues 648 to 720; that stretch reads SETYPINMHN…VGRACGHGHP (73 aa). Residues Asn677, Asn687, and Asn697 are each glycosylated (N-linked (GlcNAc...) asparagine). The chain crosses the membrane as a helical span at residues 721–741; that stretch reads YVPDVLFWSVILFFSTVTMSA. The Cytoplasmic portion of the chain corresponds to 742–762; that stretch reads TLKQFKTSRYFPTKVRSIVSD. The chain crosses the membrane as a helical span at residues 763–783; sequence FAVFLTILCMVLIDYAIGIPS. Residues 784–809 are Extracellular-facing; the sequence is PKLQVPSVFKPTRDDRGWFVTPLGPN. A helical transmembrane segment spans residues 810–830; it reads PWWTIIAAIIPALLCTILIFM. Over 831-855 the chain is Cytoplasmic; sequence DQQITAVIINRKEHKLKKGCGYHLD. Residues 856–876 form a helical membrane-spanning segment; it reads LLMVAVMLGVCSIMGLPWFVA. Residues 877 to 912 are Extracellular-facing; sequence ATVLSITHVNSLKLESECSAPGEQPKFLGIREQRVT. The chain crosses the membrane as a helical span at residues 913-933; the sequence is GLMIFILMGSSVFMTSILKFI. The Cytoplasmic portion of the chain corresponds to 934–935; the sequence is PM. Residues 936-956 traverse the membrane as a helical segment; the sequence is PVLYGVFLYMGASSLKGIQLF. The Extracellular portion of the chain corresponds to 957–998; it reads DRIKLFWMPAKHQPDFIYLRHVPLRKVHLFTVIQMSCLGLLW. Residues 999–1019 form a helical membrane-spanning segment; it reads IIKVSRAAIVFPMMVLALVFV. Residues 1020 to 1118 lie on the Cytoplasmic side of the membrane; that stretch reads RKLMDFLFTK…SRFPSKSSPS (99 aa). 2 positions are modified to phosphoserine: Ser1057 and Ser1085.

Belongs to the anion exchanger (TC 2.A.31) family. In terms of processing, N-glycosylated. As to expression, in the brain, detected in cerebral cortex, subcortex, cerebellum, hippocampus and medulla (at protein level). In the cerebrum, expressed at high levels throughout the cortex, at lower levels in striatum and not detectable in the corpus callosum (at protein level). In the cerebellum, detected at high levels in the molecular layer but at very low levels in the granular layer (at protein level). In the central nervous system, detected in neurons in the olfactory bulb, cortex and cerebellum (at protein level). Within the hippocampus, abundantly expressed in CA3 pyramidal cells (at protein level). Strongly expressed in the retina with high levels in bipolar and amacrine cells (at protein level). Expressed in the epithelial cells of the choroid plexus. During embryonic development, expressed in neurons of the central nervous system. Also expressed in the peripheral nervous system and in non-neuronal tissues such as the dura and some epithelia including the acid-secreting epithelium of the stomach and the duodenal epithelium. In the embryonic retina, expression is restricted to the neuronal cell layer and the retinal pigment epithelium. In terms of tissue distribution, expressed at high levels in brain and at low levels in the pituitary, testis, kidney and ileum. Also expressed in pancreatic islets.

It localises to the basolateral cell membrane. It is found in the apical cell membrane. The protein resides in the cell projection. Its subcellular location is the dendrite. The protein localises to the axon. It localises to the perikaryon. It is found in the presynapse. The protein resides in the postsynapse. It catalyses the reaction 2 hydrogencarbonate(out) + chloride(in) + Na(+)(out) = 2 hydrogencarbonate(in) + chloride(out) + Na(+)(in). With respect to regulation, zinc-binding negatively regulates its activity. In terms of biological role, sodium/bicarbonate cotransporter which plays an important role in regulating intracellular pH. Has been shown to act as a sodium/bicarbonate cotransporter in exchange for intracellular chloride. Has also been shown to act as a sodium/biocarbonate cotransporter which is not responsible for net efflux of chloride, with the observed chloride efflux being due to chloride self-exchange. Controls neuronal pH and may contribute to the secretion of cerebrospinal fluid. Acting on presynaptic intracellular pH, it promotes GABA release, reduces the excitability of CA1 pyramidal neurons, and modulates short-term synaptic plasticity. Required in retinal cells to maintain normal pH which is necessary for normal vision. In the kidney, likely to mediate bicarbonate reclamation in the apical membrane of the proximal tubules. Functionally, sodium/bicarbonate cotransporter which mediates cotransport of sodium and bicarbonate in association with an efflux of intracellular chloride. The protein is Sodium-driven chloride bicarbonate exchanger of Mus musculus (Mouse).